A 214-amino-acid polypeptide reads, in one-letter code: 3-isopropylmalate dehydratase small subunit (214 aa).

Belongs to the LeuD family. LeuD type 1 subfamily. Heterodimer of LeuC and LeuD.

The catalysed reaction is (2R,3S)-3-isopropylmalate = (2S)-2-isopropylmalate. It participates in amino-acid biosynthesis; L-leucine biosynthesis; L-leucine from 3-methyl-2-oxobutanoate: step 2/4. Functionally, catalyzes the isomerization between 2-isopropylmalate and 3-isopropylmalate, via the formation of 2-isopropylmaleate. This is 3-isopropylmalate dehydratase small subunit from Alcanivorax borkumensis (strain ATCC 700651 / DSM 11573 / NCIMB 13689 / SK2).